Here is a 2126-residue protein sequence, read N- to C-terminus: Phthioceranic/hydroxyphthioceranic acid synthase (2126 aa).

A Ketosynthase family 3 (KS3) domain is found at 24–447; that stretch reads VTPVAVIGMA…GTNVHAVVEQ (424 aa). Catalysis depends on Cys-196, which acts as the Acyl-thioester intermediate; for beta-ketoacyl synthase activity. Residues His-331 and His-367 each act as for beta-ketoacyl synthase activity in the active site. A linker domain (LD) region spans residues 449 to 549; that stretch reads PQTEAQPHAA…VYQPAVGQDD (101 aa). The segment at 550 to 849 is acyltransferase (AT); sequence RGPVWLFSGQ…VAALAGMRRE (300 aa). The Acyl-ester intermediate; for acyltransferase activity role is filled by Ser-641. Residues 909–1191 are dehydratase (DH); sequence STVAVHPLLG…LAVCGLRIGT (283 aa). The interval 914 to 1032 is N-terminal hotdog fold; that stretch reads HPLLGAHVRL…RRASAVLQQV (119 aa). The region spanning 914 to 1198 is the PKS/mFAS DH domain; the sequence is HPLLGAHVRL…IGTGVSERDK (285 aa). His-947 serves as the catalytic Proton acceptor; for dehydratase activity. Positions 1051-1198 are C-terminal hotdog fold; sequence PCRVDGEDLR…IGTGVSERDK (148 aa). Asp-1115 serves as the catalytic Proton donor; for dehydratase activity. Residues 1227–1398 form a pseudo beta-ketoacyl reductase (PsiKR) region; sequence KWLLISDCAA…SEEDETAWRD (172 aa). The interval 1426 to 1750 is enoylreductase (ER); sequence SGMRLQIRTP…EHTGKLVLHI (325 aa). Residues 1772 to 2019 form a beta-ketoacyl reductase (KR) region; it reads GSYIITGGLG…AERSRFFEVF (248 aa). NADP(+) is bound by residues 1780 to 1783, 1803 to 1806, 1831 to 1832, and 1904 to 1905; these read LGGL, SRTQ, DI, and FS. A Carrier domain is found at 2040–2126; it reads DEWPARLRQL…DAPAAALSSQ (87 aa). An O-(pantetheine 4'-phosphoryl)serine modification is found at Ser-2075.

Requires pantetheine 4'-phosphate as cofactor.

The catalysed reaction is hexadecanoyl-[(hydroxy)phthioceranic acid synthase] + 7 (S)-methylmalonyl-CoA + 14 NADPH + 21 H(+) = C37-phthioceranyl-[(hydroxy)phthioceranic acid synthase] + 7 CO2 + 14 NADP(+) + 7 CoA + 7 H2O. It carries out the reaction hexadecanoyl-[(hydroxy)phthioceranic acid synthase] + 8 (S)-methylmalonyl-CoA + 16 NADPH + 24 H(+) = C40-phthioceranyl-[(hydroxy)phthioceranic acid synthase] + 8 CO2 + 16 NADP(+) + 8 CoA + 8 H2O. Its pathway is lipid metabolism; fatty acid biosynthesis. The protein operates within glycolipid metabolism; sulfolipid-1 biosynthesis. In terms of biological role, involved in sulfolipid-1 biosynthesis. Catalyzes the synthesis of the hepta- and octamethyl phthioceranic and hydroxyphthioceranic acids, the methyl-branched acyl constituents of sulfolipids. This chain is Phthioceranic/hydroxyphthioceranic acid synthase (pks2), found in Mycobacterium bovis (strain ATCC BAA-935 / AF2122/97).